Reading from the N-terminus, the 215-residue chain is Nuclear autoantigen Sp-100 (215 aa).

An SAND domain is found at 1–31 (EGDRGASKNWKLSIRCGGYTLKVLTENKFLP). 2 DNA-binding regions (HMG box) span residues 32 to 108 (EPPS…KTYI) and 124 to 192 (PKRP…AACR). The short motif at 72-89 (KKRSEMWKTIFAKEKGKF) is the Nuclear localization signal element. Disordered regions lie at residues 104–124 (MKTYIPPKGEKKKKFKDPNAP) and 193–215 (AKGKPNSATKRVVKAEKSKKKKE).

In terms of assembly, homodimer. Interacts with members of the HP1 family of nonhistone chromosomal protein, such as CBX5 and CBX3 via the PxVxL motif. Interacts with ETS1; the interaction is direct and modulates ETS1 transcriptional activity. Interacts with the MRN complex which is composed of two heterodimers RAD50/MRE11 associated with a single NBN; recruits the complex to PML-related bodies. Interacts with HIPK2; positively regulates TP53-dependent transcription. Interacts with CASP8AP2; may negatively regulate CASP8AP2 export from the nucleus to the cytoplasm. Post-translationally, phosphorylated. In terms of processing, sumoylated. Sumoylated with SUMO1. Sumoylation depends on a functional nuclear localization signal but is not necessary for nuclear import or nuclear body targeting. Sumoylation may stabilize the interaction with CBX5.

The protein resides in the nucleus. It localises to the PML body. The protein localises to the nuclear body. It is found in the cytoplasm. In terms of biological role, together with PML, this tumor suppressor is a major constituent of the PML bodies, a subnuclear organelle involved in a large number of physiological processes including cell growth, differentiation and apoptosis. Functions as a transcriptional coactivator of ETS1 and ETS2. Under certain conditions, it may also act as a corepressor of ETS1 preventing its binding to DNA. Through the regulation of ETS1 it may play a role in angiogenesis, controlling endothelial cell motility and invasion. Through interaction with the MRN complex it may be involved in the regulation of telomeres lengthening. May also regulate TP53-mediated transcription and through CASP8AP2, regulate FAS-mediated apoptosis. May also play a role in infection by viruses through mechanisms that may involve chromatin and/or transcriptional regulation. The chain is Nuclear autoantigen Sp-100 (SP100) from Pan troglodytes (Chimpanzee).